The primary structure comprises 448 residues: MKKDKTERTKQSWRKAQNAPSLSEVNNSVAIPKNAKFFRKLFAFMGPGALIAVGYVDPGNWATSIAGGSEFGYTLLSVILISNILAVLLQSLASKLGIVTGRDLAQASSDHFSKPFGFVLWILAELAIIATDIAEVIGSAIALNLLFGIPLIWGVCITALDIFLVLFLQHKGFRYIEVIVITLMVTILVCFGAEMVMSHPDMQAIAKGFIPQSEIVTNPAMLYIALGILGATVMPHNLYLHSSIVQTRQYARTKEGKKEAIRFSFIDSTFSLTIALLINASILILAAAAFYTTGQHNVAGIEDAYKLLNPTLGSSIASTVFAVALLASGQNSTLTGTLAGQIVMEGFLNIRLKPVVRRLLTRVLAIVPAVIITALYGANGINELLIFSQVILSMQLSFAVIPLVMFTSDKQKMGEFVNPTWLKIISWAVAIFIAVLNIYLLFYTLTSL.

Over residues 1 to 10 (MKKDKTERTK) the composition is skewed to basic and acidic residues. The segment at 1–20 (MKKDKTERTKQSWRKAQNAP) is disordered. Transmembrane regions (helical) follow at residues 41–61 (LFAFMGPGALIAVGYVDPGNW), 69–89 (SEFGYTLLSVILISNILAVLL), 117–137 (GFVLWILAELAIIATDIAEVI), 147–167 (FGIPLIWGVCITALDIFLVLF), 176–196 (IEVIVITLMVTILVCFGAEMV), 215–235 (IVTNPAMLYIALGILGATVMP), 270–290 (FSLTIALLINASILILAAAAF), 307–327 (LLNPTLGSSIASTVFAVALLA), 363–383 (VLAIVPAVIITALYGANGINE), 384–404 (LLIFSQVILSMQLSFAVIPLV), and 424–444 (IISWAVAIFIAVLNIYLLFYT).

It belongs to the NRAMP family.

It localises to the cell membrane. Its function is as follows. H(+)-stimulated, divalent metal cation uptake system. The protein is Divalent metal cation transporter MntH of Listeria monocytogenes serotype 4b (strain CLIP80459).